The sequence spans 398 residues: Glucose-1-phosphate adenylyltransferase (398 aa).

Residues Y100, G165, 180–181 (EK), and S191 each bind alpha-D-glucose 1-phosphate.

This sequence belongs to the bacterial/plant glucose-1-phosphate adenylyltransferase family. In terms of assembly, homotetramer.

The catalysed reaction is alpha-D-glucose 1-phosphate + ATP + H(+) = ADP-alpha-D-glucose + diphosphate. It participates in glycan biosynthesis; glycogen biosynthesis. Its function is as follows. Involved in the biosynthesis of ADP-glucose, a building block required for the elongation reactions to produce glycogen. Catalyzes the reaction between ATP and alpha-D-glucose 1-phosphate (G1P) to produce pyrophosphate and ADP-Glc. The polypeptide is Glucose-1-phosphate adenylyltransferase (Desulfitobacterium hafniense (strain DSM 10664 / DCB-2)).